Reading from the N-terminus, the 396-residue chain is CCA-adding enzyme (396 aa).

Positions 27 and 30 each coordinate ATP. Residues glycine 27 and arginine 30 each coordinate CTP. Residues aspartate 40 and aspartate 42 each coordinate Mg(2+). Residues arginine 111, aspartate 154, arginine 157, arginine 160, and arginine 163 each contribute to the ATP site. CTP-binding residues include arginine 111, aspartate 154, arginine 157, arginine 160, and arginine 163.

It belongs to the tRNA nucleotidyltransferase/poly(A) polymerase family. Bacterial CCA-adding enzyme type 3 subfamily. In terms of assembly, homodimer. Mg(2+) is required as a cofactor.

It carries out the reaction a tRNA precursor + 2 CTP + ATP = a tRNA with a 3' CCA end + 3 diphosphate. The catalysed reaction is a tRNA with a 3' CCA end + 2 CTP + ATP = a tRNA with a 3' CCACCA end + 3 diphosphate. In terms of biological role, catalyzes the addition and repair of the essential 3'-terminal CCA sequence in tRNAs without using a nucleic acid template. Adds these three nucleotides in the order of C, C, and A to the tRNA nucleotide-73, using CTP and ATP as substrates and producing inorganic pyrophosphate. tRNA 3'-terminal CCA addition is required both for tRNA processing and repair. Also involved in tRNA surveillance by mediating tandem CCA addition to generate a CCACCA at the 3' terminus of unstable tRNAs. While stable tRNAs receive only 3'-terminal CCA, unstable tRNAs are marked with CCACCA and rapidly degraded. In Bacillus velezensis (strain DSM 23117 / BGSC 10A6 / LMG 26770 / FZB42) (Bacillus amyloliquefaciens subsp. plantarum), this protein is CCA-adding enzyme.